We begin with the raw amino-acid sequence, 368 residues long: Phosphate acyltransferase (368 aa).

The interval 335 to 368 (VSLGDGEHDAGGAGPASPAAGHHAEPSAAQSSKA) is disordered. The segment covering 349–368 (PASPAAGHHAEPSAAQSSKA) has biased composition (low complexity).

It belongs to the PlsX family. Homodimer. Probably interacts with PlsY.

It is found in the cytoplasm. It catalyses the reaction a fatty acyl-[ACP] + phosphate = an acyl phosphate + holo-[ACP]. It functions in the pathway lipid metabolism; phospholipid metabolism. Functionally, catalyzes the reversible formation of acyl-phosphate (acyl-PO(4)) from acyl-[acyl-carrier-protein] (acyl-ACP). This enzyme utilizes acyl-ACP as fatty acyl donor, but not acyl-CoA. In Burkholderia multivorans (strain ATCC 17616 / 249), this protein is Phosphate acyltransferase.